Reading from the N-terminus, the 758-residue chain is 52 kDa repressor of the inhibitor of the protein kinase (758 aa).

A THAP-type zinc finger spans residues 1 to 86; the sequence is MPNFCAAPNC…LRDNAIPTIF (86 aa). The disordered stretch occupies residues 116–141; sequence QKKIEETSEQEQETNTNAQNPSAEAV. Serine 563 is subject to Phosphoserine.

As to quaternary structure, interacts with DNAJC3, probably sequestring it.

Its function is as follows. Upstream regulator of interferon-induced serine/threonine protein kinase R (PKR). May block the PKR-inhibitory function of DNAJC3, resulting in restoration of kinase activity and suppression of cell growth. The chain is 52 kDa repressor of the inhibitor of the protein kinase from Mus musculus (Mouse).